The chain runs to 257 residues: Isoprenyl transferase (257 aa).

Aspartate 37 is a catalytic residue. Mg(2+) is bound at residue aspartate 37. Substrate contacts are provided by residues 38-41 (GNGR), tryptophan 42, arginine 50, histidine 54, and 82-84 (STE). The active-site Proton acceptor is asparagine 85. Residues tryptophan 86, arginine 88, arginine 205, and 211–213 (RLS) contribute to the substrate site. Glutamate 224 is a binding site for Mg(2+).

The protein belongs to the UPP synthase family. As to quaternary structure, homodimer. Requires Mg(2+) as cofactor.

Functionally, catalyzes the condensation of isopentenyl diphosphate (IPP) with allylic pyrophosphates generating different type of terpenoids. In Shouchella clausii (strain KSM-K16) (Alkalihalobacillus clausii), this protein is Isoprenyl transferase.